The sequence spans 180 residues: Protein SPMIP9 (180 aa).

Microtubule inner protein component of sperm flagellar doublet microtubules. Testis-specific. Detected in the germ cell lineage at all stages.

The protein localises to the nucleus. It localises to the cytoplasm. It is found in the cytoskeleton. The protein resides in the flagellum axoneme. Functionally, microtubule inner protein (MIP) part of the dynein-decorated doublet microtubules (DMTs) in flagella axoneme. The chain is Protein SPMIP9 from Homo sapiens (Human).